Consider the following 255-residue polypeptide: Complement C1q-like protein 3 (255 aa).

Positions 1–20 are cleaved as a signal peptide; the sequence is MVLLLVILIPVLVSSAGTSA. A disordered region spans residues 39 to 109; it reads KAPSTAATPD…GLPGPPGAPG (71 aa). The Collagen-like domain occupies 61–111; it reads GPKGEAGRPGKAGPRGPPGEPGPPGPMGPPGEKGEPGRQGLPGPPGAPGLN. A compositionally biased stretch (pro residues) spans 75–89; it reads RGPPGEPGPPGPMGP. A C1q domain is found at 122–255; sequence STVPKIAFYA…TFSGFIIYAD (134 aa).

In terms of assembly, forms homooligomers. Interacts with ADGRB3. Interacts with C1QL2 and C1QL4, when proteins are coexpressed; this interaction does not occur after secretion. Highly expressed in adipose tissue, with expression levels at least 2 orders of magnitude higher than in other tissues, including brain and kidney.

Its subcellular location is the secreted. Its function is as follows. May regulate the number of excitatory synapses that are formed on hippocampus neurons. Has no effect on inhibitory synapses. Plays a role in glucose homeostasis. Via AMPK signaling pathway, stimulates glucose uptake in adipocytes, myotubes and hepatocytes and enhances insulin-stimulated glucose uptake. In a hepatoma cell line, reduces the expression of gluconeogenic enzymes G6PC1 and PCK1 and hence decreases de novo glucose production. The polypeptide is Complement C1q-like protein 3 (C1QL3) (Homo sapiens (Human)).